The following is a 534-amino-acid chain: Lysophosphatidylcholine acyltransferase 1 (534 aa).

The tract at residues 1–25 (MRLRGRGPRAAPSSSSGAGDARRLA) is disordered. Residues 1 to 57 (MRLRGRGPRAAPSSSSGAGDARRLAPPGRNPFVHELRLSALQKAQVAFMTLTLFPIR) are Cytoplasmic-facing. Low complexity predominate over residues 8–19 (PRAAPSSSSGAG). Residues 58-78 (LLFAAFMMLLAWPFALLASLG) form a helical; Signal-anchor for type II membrane protein membrane-spanning segment. At 79–534 (PPDKEPEQPL…GRKNSCKKAD (456 aa)) the chain is on the lumenal side. Positions 135–140 (HSSYFD) match the HXXXXD motif motif. 2 consecutive EF-hand domains span residues 379–414 (PVSD…VCRP) and 451–486 (VSEL…YPDY). Residues D392, S394, E398, and E403 each coordinate Ca(2+). The Di-lysine motif signature appears at 531–534 (KKAD).

Belongs to the 1-acyl-sn-glycerol-3-phosphate acyltransferase family. As to expression, predominantly expressed in lung where it is enriched in alveolar type II cells. Expressed at lower levels in spleen and brain. Also detected in erythroleukemic cells and reticulocytes. Weakly or not expressed in other tissues.

The protein resides in the endoplasmic reticulum membrane. The protein localises to the golgi apparatus membrane. It localises to the cell membrane. Its subcellular location is the lipid droplet. The catalysed reaction is a 1-acyl-sn-glycero-3-phosphocholine + an acyl-CoA = a 1,2-diacyl-sn-glycero-3-phosphocholine + CoA. The enzyme catalyses a 1-O-alkyl-sn-glycero-3-phosphocholine + acetyl-CoA = a 1-O-alkyl-2-acetyl-sn-glycero-3-phosphocholine + CoA. It carries out the reaction a 1-acyl-sn-glycero-3-phosphate + an acyl-CoA = a 1,2-diacyl-sn-glycero-3-phosphate + CoA. It catalyses the reaction a 1-O-(1Z-alkenyl)-sn-glycero-3-phosphocholine + an acyl-CoA = a 1-O-(1Z-alkenyl)-2-acyl-sn-glycero-3-phosphocholine + CoA. The catalysed reaction is 1-acyl-sn-glycero-3-phospho-(1'-sn-glycerol) + an acyl-CoA = a 1,2-diacyl-sn-glycero-3-phospho-(1'-sn-glycerol) + CoA. The enzyme catalyses 1-hexadecanoyl-sn-glycero-3-phosphocholine + hexadecanoyl-CoA = 1,2-dihexadecanoyl-sn-glycero-3-phosphocholine + CoA. It carries out the reaction 1-O-hexadecyl-sn-glycero-3-phosphocholine + hexadecanoyl-CoA = 1-O-hexadecyl-2-hexadecanoyl-sn-glycero-3-phosphocholine + CoA. It catalyses the reaction a 1-O-(1Z-alkenyl)-sn-glycero-3-phosphocholine + hexadecanoyl-CoA = 1-O-(1Z)-alkenyl-2-hexadecanoyl-sn-glycero-3-phosphocholine + CoA. The catalysed reaction is 1-hexadecanoyl-sn-glycero-3-phospho-(1'-sn-glycerol) + hexadecanoyl-CoA = 1,2-dihexadecanoyl-sn-glycero-3-phospho-(1'-sn-glycerol) + CoA. The enzyme catalyses 1-dodecanoyl-sn-glycero-3-phosphocholine + hexadecanoyl-CoA = 1-dodecanoyl-2-hexadecanoyl-sn-glycero-3-phosphocholine + CoA. It carries out the reaction 1-tetradecanoyl-sn-glycero-3-phosphocholine + hexadecanoyl-CoA = 1-tetradecanoyl-2-hexadecanoyl-sn-glycero-3-phosphocholine + CoA. It catalyses the reaction 1-O-octadecyl-sn-glycero-3-phosphocholine + hexadecanoyl-CoA = 1-O-octadecyl-2-hexadecanoyl-sn-glycero-3-phosphocholine + CoA. The catalysed reaction is 1-octadecanoyl-sn-glycero-3-phosphocholine + hexadecanoyl-CoA = 1-octadecanoyl-2-hexadecanoyl-sn-glycero-3-phosphocholine + CoA. The enzyme catalyses 1-(9Z-octadecenoyl)-sn-glycero-3-phosphocholine + hexadecanoyl-CoA = 1-(9Z-octadecenoyl)-2-hexadecanoyl-sn-glycero-3-phosphocholine + CoA. It carries out the reaction 1-eicosanoyl-sn-glycero-3-phosphocholine + hexadecanoyl-CoA = 1-eicosanoyl-2-hexadecanoyl-sn-glycero-3-phosphocholine + CoA. It catalyses the reaction hexanoyl-CoA + 1-hexadecanoyl-sn-glycero-3-phosphocholine = 1-hexadecanoyl-2-hexanoyl-sn-glycero-3-phosphocholine + CoA. The catalysed reaction is octanoyl-CoA + 1-hexadecanoyl-sn-glycero-3-phosphocholine = 1-hexadecanoyl-2-octanoyl-sn-glycero-3-phosphocholine + CoA. The enzyme catalyses decanoyl-CoA + 1-hexadecanoyl-sn-glycero-3-phosphocholine = 1-hexadecanoyl-2-decanoyl-sn-glycero-3-phosphocholine + CoA. It carries out the reaction dodecanoyl-CoA + 1-hexadecanoyl-sn-glycero-3-phosphocholine = 1-hexadecanoyl-2-dodecanoyl-sn-glycero-3-phosphocholine + CoA. It catalyses the reaction tetradecanoyl-CoA + 1-hexadecanoyl-sn-glycero-3-phosphocholine = 1-hexadecanoyl-2-tetradecanoyl-sn-glycero-3-phosphocholine + CoA. The catalysed reaction is 1-hexadecanoyl-sn-glycero-3-phosphocholine + (9Z)-octadecenoyl-CoA = 1-hexadecanoyl-2-(9Z-octadecenoyl)-sn-glycero-3-phosphocholine + CoA. The enzyme catalyses (9Z,12Z)-octadecadienoyl-CoA + 1-hexadecanoyl-sn-glycero-3-phosphocholine = 1-hexadecanoyl-2-(9Z,12Z-octadecadienoyl)-sn-glycero-3-phosphocholine + CoA. It carries out the reaction (4Z,7Z,10Z,13Z,16Z,19Z)-docosahexaenoyl-CoA + 1-hexadecanoyl-sn-glycero-3-phosphocholine = 1-hexadecanoyl-2-(4Z,7Z,10Z,13Z,16Z,19Z-docosahexaenoyl)-sn-glycero-3-phosphocholine + CoA. It catalyses the reaction 1-hexadecanoyl-sn-glycero-3-phosphocholine + acetyl-CoA = 1-hexadecanoyl-2-acetyl-sn-glycero-3-phosphocholine + CoA. The catalysed reaction is eicosanoyl-CoA + 1-hexadecanoyl-sn-glycero-3-phosphocholine = 1-hexadecanoyl-2-eicosanoyl-sn-glycero-3-phosphocholine + CoA. The enzyme catalyses 1-O-hexadecyl-sn-glycero-3-phosphocholine + acetyl-CoA = 1-O-hexadecyl-2-acetyl-sn-glycero-3-phosphocholine + CoA. It carries out the reaction a 1-acyl-sn-glycero-3-phosphocholine + hexadecanoyl-CoA = 1-acyl-2-hexadecanoyl-sn-glycero-3-phosphocholine + CoA. It catalyses the reaction a 1-acyl-sn-glycero-3-phosphate + hexadecanoyl-CoA = 1-acyl-2-hexadecanoyl-sn-glycero-3-phosphate + CoA. The catalysed reaction is 1-acyl-sn-glycero-3-phospho-(1'-sn-glycerol) + hexadecanoyl-CoA = 1-acyl-2-hexadecanoyl-sn-glycero-3-phospho-(1'-sn-glycerol) + CoA. The protein operates within lipid metabolism; phospholipid metabolism. Its activity is regulated as follows. Not activated by inflammatory stimulation. Inhibited by Cu(2+), Fe(2+), Ca(2+) and Mg(2+). Activity is not affected by Co(2+) or Mn(2+). In terms of biological role, exhibits both acyltransferase and acetyltransferase activities. Activity is calcium-independent. Catalyzes the conversion of lysophosphatidylcholine (1-acyl-sn-glycero-3-phosphocholine or LPC) into phosphatidylcholine (1,2-diacyl-sn-glycero-3-phosphocholine or PC). Catalyzes the conversion 1-acyl-sn-glycerol-3-phosphate (lysophosphatidic acid or LPA) into 1,2-diacyl-sn-glycerol-3-phosphate (phosphatidic acid or PA) by incorporating an acyl moiety at the sn-2 position of the glycerol backbone. Displays a clear preference for saturated fatty acyl-CoAs, and 1-myristoyl or 1-palmitoyl LPC as acyl donors and acceptors, respectively. Involved in platelet-activating factor (PAF) biosynthesis by catalyzing the conversion of the PAF precursor, 1-O-alkyl-sn-glycero-3-phosphocholine (lyso-PAF) into 1-O-alkyl-2-acetyl-sn-glycero-3-phosphocholine (PAF). May synthesize phosphatidylcholine in pulmonary surfactant, thereby playing a pivotal role in respiratory physiology. Involved in the regulation of lipid droplet number and size. This is Lysophosphatidylcholine acyltransferase 1 (Lpcat1) from Mus musculus (Mouse).